The sequence spans 4388 residues: Intermembrane lipid transfer protein VPS13D (4388 aa).

The Chorein N-terminal domain maps to 2–115; the sequence is LEGLVAWVLN…ERERKKALLQ (114 aa). Ser-663 is subject to Phosphoserine. Residues 745 to 796 are disordered; the sequence is QDNSRRKSRDGSASEETQFSDDEYKTPLATPPNTPPPESSSSNGEKTPPFSG. Basic and acidic residues predominate over residues 747–756; the sequence is NSRRKSRDGS. The segment covering 773–782 has biased composition (pro residues); sequence ATPPNTPPPE. Phosphoserine occurs at positions 1034, 1038, 1042, 1138, and 1341. The disordered stretch occupies residues 1563–1582; that stretch reads ASATSSPCPDSPLPPLSTCG. Phosphoserine occurs at positions 1598, 1603, and 1699. Disordered stretches follow at residues 1741–1771, 2070–2108, and 2122–2145; these read RPTS…VDEP, QDKE…QFTM, and FVPS…ESSS. Thr-1761 is subject to Phosphothreonine. Ser-1765 carries the phosphoserine modification. Residues 2123-2144 show a composition bias toward polar residues; the sequence is VPSTSTKQQGPQPTLSVGQESS. Phosphoserine is present on residues Ser-2435, Ser-2671, Ser-2861, Ser-2864, and Ser-2983. Positions 2633-2676 constitute a UBA domain; it reads TLDPVLELQLARLQELGFSMDDCRKALLACQGQLKKAASWLFKN. An SHR-BD domain is found at 3276 to 3558; it reads LKIFISAPYW…LDYAWDEPTL (283 aa). Residue Lys-3524 is modified to N6-acetyllysine.

It belongs to the VPS13 family. Widely expressed.

Functionally, mediates the transfer of lipids between membranes at organelle contact sites. Functions in promoting mitochondrial clearance by mitochondrial autophagy (mitophagy), also possibly by positively regulating mitochondrial fission. Mitophagy plays an important role in regulating cell health and mitochondrial size and homeostasis. This chain is Intermembrane lipid transfer protein VPS13D, found in Homo sapiens (Human).